Reading from the N-terminus, the 590-residue chain is MHRYRSHTCGALRDSHIDQTVRLSGWCHRIRDHGGVLFIDLRDHYGLTQCVADPDSPAFAQAEKLRSEWVVRIDGKARLRPAGTENPELPTGQIEIYINEIEVLGPADELPLPVFGEQEYPEDIRLKYRFLDLRREKLHQNIMTRGAIVDSMRKRMKEQGFFEFQTPILTASSPEGARDFLVPSRIHPGKFYALPQAPQQYKQLLMMSGFDRYFQIAPCFRDEDPRADRLPGEFYQLDLEMSFVEQDDVFAAVEPVVTGVFEEFAKGKPVTKNWPRIPFAESLRKYGTDKPDLRNPLLMQDVSQHFRGSGFKVFARMLEDSKNQVWAIPGPGGGSRAFCDRMNSWAQGEGQPGLGYIMWREGGEGAGPLANNIGPERTEAIRQQLGLKAGDAAFFVAGDPAKFWKFAGLARTKLGEELNVIDKDRFELAWIVDFPMYEYNEDEKKVDFSHNPFSMPQGGLDALNNQDPLTIKAFQYDITCNGYEIASGGIRNHRPEAMVKAFEIAGYGENDVVERFGGMYRAFQYGAPPHGGMAAGVDRVVMLLCGTTNLREISLFPMNQRAEDLLMGAPSDVTPKQLRELHIRLNLPQD.

Glu175 is a binding site for L-aspartate. Residues 199–202 (QQYK) form an aspartate region. L-aspartate contacts are provided by Arg221 and His450. Residue 221–223 (RDE) participates in ATP binding. Glu484 is an ATP binding site. Residue Arg491 coordinates L-aspartate. 536–539 (GVDR) provides a ligand contact to ATP.

The protein belongs to the class-II aminoacyl-tRNA synthetase family. Type 1 subfamily. In terms of assembly, homodimer.

Its subcellular location is the cytoplasm. The enzyme catalyses tRNA(Asx) + L-aspartate + ATP = L-aspartyl-tRNA(Asx) + AMP + diphosphate. Its function is as follows. Aspartyl-tRNA synthetase with relaxed tRNA specificity since it is able to aspartylate not only its cognate tRNA(Asp) but also tRNA(Asn). Reaction proceeds in two steps: L-aspartate is first activated by ATP to form Asp-AMP and then transferred to the acceptor end of tRNA(Asp/Asn). This Nitrobacter hamburgensis (strain DSM 10229 / NCIMB 13809 / X14) protein is Aspartate--tRNA(Asp/Asn) ligase.